The primary structure comprises 485 residues: Probable trichothecene esterase SAT6 (485 aa).

The tract at residues 1–23 (MPQDPNTTLQMSSSKPSLSDLSV) is disordered. Positions 9–23 (LQMSSSKPSLSDLSV) are enriched in low complexity. Active-site charge relay system residues include S262, D406, and H438.

This sequence belongs to the AB hydrolase superfamily. Lipase family.

The protein operates within mycotoxin biosynthesis. Functionally, probable trichothecene esterase; part of the satratoxin SC1 cluster involved in the biosynthesis of satratoxins, trichothecene mycotoxins that are associated with human food poisonings. Satratoxins are suggested to be made by products of multiple gene clusters (SC1, SC2 and SC3) that encode 21 proteins in all, including polyketide synthases, acetyltransferases, and other enzymes expected to modify the trichothecene skeleton. SC1 encodes 10 proteins, SAT1 to SAT10. The largest are SAT8, which encodes a putative polyketide synthase (PKS) with a conventional non-reducing architecture, and SAT10, a putative protein containing four ankyrin repeats and thus may be involved in protein scaffolding. The putative short-chain reductase SAT3 may assist the PKS in some capacity. SAT6 contains a secretory lipase domain and acts probably as a trichothecene esterase. SAT5 encodes a putative acetyltransferase, and so, with SAT6, may affect endogenous protection from toxicity. The probable transcription factor SAT9 may regulate the expression of the SC1 cluster. SC2 encodes proteins SAT11 to SAT16, the largest of which encodes the putative reducing PKS SAT13. SAT11 is a cytochrome P450 monooxygenase, while SAT14 and SAT16 are probable acetyltransferases. The SC2 cluster may be regulated by the transcription factor SAT15. SC3 is a small cluster that encodes 5 proteins, SAT17 to SAT21. SAT21 is a putative MFS-type transporter which may have a role in exporting secondary metabolites. The four other proteins putatively encoded in SC3 include the taurine hydroxylase-like protein SAT17, the O-methyltransferase SAT18, the acetyltransferase SAT19, and the Cys6-type zinc finger SAT20, the latter being probably involved in regulation of SC3 expression. This is Probable trichothecene esterase SAT6 from Stachybotrys chartarum (strain CBS 109288 / IBT 7711) (Toxic black mold).